The sequence spans 182 residues: Thymidine kinase (182 aa).

8–15 contacts ATP; it reads GPMFSGKT. Catalysis depends on Glu85, which acts as the Proton acceptor. Phe117 is a binding site for substrate. 2 residues coordinate Zn(2+): Cys142 and Cys145. 161–165 serves as a coordination point for substrate; sequence IIEIG. Positions 174 and 177 each coordinate Zn(2+).

The protein belongs to the thymidine kinase family.

The enzyme catalyses thymidine + ATP = dTMP + ADP + H(+). The sequence is that of Thymidine kinase (TK) from Amsacta moorei entomopoxvirus (AmEPV).